The chain runs to 883 residues: Translation initiation factor IF-2 (883 aa).

The segment covering 32 to 45 (NDLNGKNNSNSSIN) has biased composition (polar residues). Disordered regions lie at residues 32–216 (NDLN…QNKY) and 251–275 (RKLG…AETE). Residues 46–62 (LDKHNNKVEYSQNRDNR) show a composition bias toward basic and acidic residues. The segment covering 75 to 216 (GGYSQNRDNR…VGKNTSQNKY (142 aa)) has biased composition (polar residues). The span at 251 to 260 (RKLGEKKKQQ) shows a compositional bias: basic and acidic residues. The tr-type G domain maps to 381-554 (EKPPVITIMG…DMMLLKANPS (174 aa)). The tract at residues 390-397 (GHVDHGKT) is G1. 390–397 (GHVDHGKT) is a binding site for GTP. The tract at residues 415–419 (GITQH) is G2. Residues 436–439 (DTPG) are G3. Residues 436-440 (DTPGH) and 490-493 (NKID) each bind GTP. A G4 region spans residues 490–493 (NKID). Residues 526–528 (SAL) form a G5 region.

This sequence belongs to the TRAFAC class translation factor GTPase superfamily. Classic translation factor GTPase family. IF-2 subfamily.

Its subcellular location is the cytoplasm. Its function is as follows. One of the essential components for the initiation of protein synthesis. Protects formylmethionyl-tRNA from spontaneous hydrolysis and promotes its binding to the 30S ribosomal subunits. Also involved in the hydrolysis of GTP during the formation of the 70S ribosomal complex. This Borrelia garinii subsp. bavariensis (strain ATCC BAA-2496 / DSM 23469 / PBi) (Borreliella bavariensis) protein is Translation initiation factor IF-2.